The sequence spans 831 residues: Multiphosphoryl transfer protein 1 (831 aa).

Residues 1–90 enclose the HPr domain; sequence MLTIQFLCPL…EYIQVRFIDS (90 aa). The Pros-phosphohistidine intermediate; for HPr activity role is filled by H15. Phosphohistidine; by EI is present on H15. Positions 119–650 are PTS EI; that stretch reads GNVLASGVGV…AVKSQLRQLD (532 aa). H298 serves as the catalytic Tele-phosphohistidine intermediate; for PTS EI activity. H298 is subject to Phosphohistidine; by autocatalysis. Phosphoenolpyruvate-binding residues include R405 and R441. Mg(2+) contacts are provided by E540 and D564. Residues 563–564 and R574 each bind phosphoenolpyruvate; that span reads ND. Catalysis depends on C611, which acts as the Proton donor; for EI activity. The PTS EIIA type-2 domain occupies 685-828; that stretch reads PLLALENIFV…QSILTLLETE (144 aa). Catalysis depends on H747, which acts as the Tele-phosphohistidine intermediate; for PTS EIIA activity. Phosphohistidine; by HPr is present on H747.

It belongs to the PEP-utilizing enzyme family. Mg(2+) serves as cofactor.

Its subcellular location is the cytoplasm. The catalysed reaction is L-histidyl-[protein] + phosphoenolpyruvate = N(pros)-phospho-L-histidyl-[protein] + pyruvate. It carries out the reaction D-fructose(out) + N(pros)-phospho-L-histidyl-[protein] = D-fructose 1-phosphate(in) + L-histidyl-[protein]. Functionally, multifunctional protein that includes general (non sugar-specific) and sugar-specific components of the phosphoenolpyruvate-dependent sugar phosphotransferase system (sugar PTS). This major carbohydrate active transport system catalyzes the phosphorylation of incoming sugar substrates concomitantly with their translocation across the cell membrane. The enzyme II FryABC PTS system is involved in fructose transport. This is Multiphosphoryl transfer protein 1 (fryA) from Escherichia coli (strain K12).